Consider the following 639-residue polypeptide: Chaperone protein DnaK (639 aa).

Position 195 is a phosphothreonine; by autocatalysis (Thr-195). Residues 601 to 618 are compositionally biased toward low complexity; the sequence is NAAAGAAPAGEPAPGEPQ. The tract at residues 601-639 is disordered; sequence NAAAGAAPAGEPAPGEPQAEQKKDDGVIDAEYVDVDEKK. Acidic residues predominate over residues 627 to 639; sequence VIDAEYVDVDEKK.

Belongs to the heat shock protein 70 family.

Its function is as follows. Acts as a chaperone. This chain is Chaperone protein DnaK, found in Acidobacterium capsulatum (strain ATCC 51196 / DSM 11244 / BCRC 80197 / JCM 7670 / NBRC 15755 / NCIMB 13165 / 161).